A 305-amino-acid polypeptide reads, in one-letter code: Peroxisome assembly protein 26 (305 aa).

Residues 1-25 form a disordered region; sequence MKSDCSTSAAPFRGLGGPLRSSEPV. The Cytoplasmic segment spans residues 1 to 246; sequence MKSDCSTSAA…RQLWDSAVSH (246 aa). A helical; Signal-anchor for type II membrane protein transmembrane segment spans residues 247 to 267; that stretch reads FFSLPFKKSLLAALILCLLVV. Residues 268–305 lie on the Peroxisomal matrix side of the membrane; that stretch reads RFDPASPSSLPSLYKLAQLFRWIRKAASSRLYQLRIRD.

This sequence belongs to the peroxin-26 family. In terms of assembly, interacts (via its cytoplasmic domain) with PEX6; interaction is direct and is ATP-dependent. Interacts with PEX1; interaction is indirect and is mediated via interaction with PEX6.

It is found in the peroxisome membrane. Its function is as follows. Peroxisomal docking factor that anchors PEX1 and PEX6 to peroxisome membranes. PEX26 is therefore required for the formation of the PEX1-PEX6 AAA ATPase complex, a complex that mediates the extraction of the PEX5 receptor from peroxisomal membrane. This is Peroxisome assembly protein 26 (PEX26) from Macaca fascicularis (Crab-eating macaque).